Here is a 363-residue protein sequence, read N- to C-terminus: 3-isopropylmalate dehydrogenase (363 aa).

NAD(+) is bound at residue 78–91 (GPKWEHLPPDQQPE). Residues arginine 99, arginine 109, arginine 138, and aspartate 227 each contribute to the substrate site. Residues aspartate 227, aspartate 251, and aspartate 255 each contribute to the Mg(2+) site. 285-297 (GSAPDIAGKNIAN) contacts NAD(+).

This sequence belongs to the isocitrate and isopropylmalate dehydrogenases family. LeuB type 1 subfamily. In terms of assembly, homodimer. The cofactor is Mg(2+). Requires Mn(2+) as cofactor.

It localises to the cytoplasm. The enzyme catalyses (2R,3S)-3-isopropylmalate + NAD(+) = 4-methyl-2-oxopentanoate + CO2 + NADH. It participates in amino-acid biosynthesis; L-leucine biosynthesis; L-leucine from 3-methyl-2-oxobutanoate: step 3/4. Functionally, catalyzes the oxidation of 3-carboxy-2-hydroxy-4-methylpentanoate (3-isopropylmalate) to 3-carboxy-4-methyl-2-oxopentanoate. The product decarboxylates to 4-methyl-2 oxopentanoate. This Shigella sonnei (strain Ss046) protein is 3-isopropylmalate dehydrogenase.